Here is a 494-residue protein sequence, read N- to C-terminus: V-type proton ATPase subunit B (494 aa).

Residue Arg-384 participates in ATP binding.

This sequence belongs to the ATPase alpha/beta chains family. In terms of assembly, V-ATPase is a heteromultimeric enzyme made up of two complexes: the ATP-hydrolytic V1 complex and the proton translocation V0 complex. The V1 complex consists of three catalytic AB heterodimers that form a heterohexamer, three peripheral stalks each consisting of EG heterodimers, one central rotor including subunits D and F, and the regulatory subunits C and H. The proton translocation complex V0 consists of the proton transport subunit a, a ring of proteolipid subunits c9c'', rotary subunit d, subunits e and f, and the accessory subunits VhaAC45 and ATP6AP2.

Functionally, non-catalytic subunit of the V1 complex of vacuolar(H+)-ATPase (V-ATPase), a multisubunit enzyme composed of a peripheral complex (V1) that hydrolyzes ATP and a membrane integral complex (V0) that translocates protons. V-ATPase is responsible for acidifying and maintaining the pH of intracellular compartments and in some cell types, is targeted to the plasma membrane, where it is responsible for acidifying the extracellular environment. Essential for the proper assembly and activity of V-ATPase. This is V-type proton ATPase subunit B (VHA55) from Heliothis virescens (Tobacco budworm moth).